The primary structure comprises 506 residues: 2-isopropylmalate synthase (506 aa).

The Pyruvate carboxyltransferase domain occupies 4-266 (ILFMDTTLRD…EPSMTLKEIK (263 aa)). Asp-13, His-201, His-203, and Asn-237 together coordinate Mn(2+). The tract at residues 390–506 (NITQLQVHFV…KLKSFIQLVK (117 aa)) is regulatory domain.

The protein belongs to the alpha-IPM synthase/homocitrate synthase family. LeuA type 1 subfamily. Homodimer. Mn(2+) is required as a cofactor.

The protein localises to the cytoplasm. It carries out the reaction 3-methyl-2-oxobutanoate + acetyl-CoA + H2O = (2S)-2-isopropylmalate + CoA + H(+). It participates in amino-acid biosynthesis; L-leucine biosynthesis; L-leucine from 3-methyl-2-oxobutanoate: step 1/4. Functionally, catalyzes the condensation of the acetyl group of acetyl-CoA with 3-methyl-2-oxobutanoate (2-ketoisovalerate) to form 3-carboxy-3-hydroxy-4-methylpentanoate (2-isopropylmalate). The sequence is that of 2-isopropylmalate synthase from Bacillus thuringiensis (strain Al Hakam).